The sequence spans 212 residues: ER lumen protein-retaining receptor 1 (212 aa).

Over 1 to 4 (MNLF) the chain is Lumenal. Residues 5 to 24 (RFLGDLSHLLAIILLLLKIW) form a helical membrane-spanning segment. At 25–32 (KSRSCAGI) the chain is on the cytoplasmic side. A helical transmembrane segment spans residues 33–52 (SGKSQVLFAVVFTARYLDLF). Positions 47–48 (RY) are interaction with the K-D-E-L motif on target proteins. Residues 53 to 58 (TNYISL) lie on the Lumenal side of the membrane. A helical transmembrane segment spans residues 59 to 79 (YNTCMKVVYIACSFTTVWMIY). The Cytoplasmic portion of the chain corresponds to 80-92 (SKFKATYDGNHDT). Residues 93-110 (FRVEFLVVPTAILAFLVN) form a helical membrane-spanning segment. The Lumenal portion of the chain corresponds to 111-116 (HDFTPL). Residues 117–135 (EILWTFSIYLESVAILPQL) traverse the membrane as a helical segment. Over 136–149 (FMVSKTGEAETITS) the chain is Cytoplasmic. The helical transmembrane segment at 150–168 (HYLFALGVYRTLYLFNWIW) threads the bilayer. Residues 159–169 (RTLYLFNWIWR) are interaction with the K-D-E-L motif on target proteins. At 169-178 (RYHFEGFFDL) the chain is on the lumenal side. The chain crosses the membrane as a helical span at residues 179–199 (IAIVAGLVQTVLYCDFFYLYI). The Cytoplasmic segment spans residues 200–212 (TKVLKGKKLSLPA). Positions 204 to 207 (KGKK) are important for recycling of cargo proteins with the sequence motif K-D-E-L from the Golgi to the endoplasmic reticulum. A Phosphoserine; by PKA modification is found at serine 209.

This sequence belongs to the ERD2 family. In terms of assembly, upon ligand binding the receptor oligomerizes and interacts with components of the transport machinery such as ARFGAP1 and ARF1. In terms of processing, phosphorylation by PKA at Ser-209 is required for endoplasmic reticulum retention function.

It is found in the golgi apparatus membrane. The protein localises to the cytoplasmic vesicle. Its subcellular location is the COPI-coated vesicle membrane. It localises to the endoplasmic reticulum membrane. The protein resides in the endoplasmic reticulum-Golgi intermediate compartment membrane. Receptor for the C-terminal sequence motif K-D-E-L that is present on endoplasmic reticulum resident proteins and that mediates their recycling from the Golgi back to the endoplasmic reticulum. This is ER lumen protein-retaining receptor 1 (Kdelr1) from Mus musculus (Mouse).